The following is a 273-amino-acid chain: Shikimate dehydrogenase (NADP(+)) (273 aa).

Residues 14–16 (SKS) and Thr61 each bind shikimate. Lys65 (proton acceptor) is an active-site residue. Shikimate contacts are provided by Asn86 and Asp102. NADP(+) is bound by residues 126–130 (GAGGA), 150–155 (NRTVAK), and Met213. Tyr215 contributes to the shikimate binding site. Residue Gly237 participates in NADP(+) binding.

This sequence belongs to the shikimate dehydrogenase family. As to quaternary structure, homodimer.

The catalysed reaction is shikimate + NADP(+) = 3-dehydroshikimate + NADPH + H(+). The protein operates within metabolic intermediate biosynthesis; chorismate biosynthesis; chorismate from D-erythrose 4-phosphate and phosphoenolpyruvate: step 4/7. In terms of biological role, involved in the biosynthesis of the chorismate, which leads to the biosynthesis of aromatic amino acids. Catalyzes the reversible NADPH linked reduction of 3-dehydroshikimate (DHSA) to yield shikimate (SA). This chain is Shikimate dehydrogenase (NADP(+)), found in Tolumonas auensis (strain DSM 9187 / NBRC 110442 / TA 4).